A 256-amino-acid chain; its full sequence is Imidazole glycerol phosphate synthase subunit HisF (256 aa).

Catalysis depends on residues aspartate 12 and aspartate 131.

The protein belongs to the HisA/HisF family. In terms of assembly, heterodimer of HisH and HisF.

Its subcellular location is the cytoplasm. It catalyses the reaction 5-[(5-phospho-1-deoxy-D-ribulos-1-ylimino)methylamino]-1-(5-phospho-beta-D-ribosyl)imidazole-4-carboxamide + L-glutamine = D-erythro-1-(imidazol-4-yl)glycerol 3-phosphate + 5-amino-1-(5-phospho-beta-D-ribosyl)imidazole-4-carboxamide + L-glutamate + H(+). It functions in the pathway amino-acid biosynthesis; L-histidine biosynthesis; L-histidine from 5-phospho-alpha-D-ribose 1-diphosphate: step 5/9. Its function is as follows. IGPS catalyzes the conversion of PRFAR and glutamine to IGP, AICAR and glutamate. The HisF subunit catalyzes the cyclization activity that produces IGP and AICAR from PRFAR using the ammonia provided by the HisH subunit. The protein is Imidazole glycerol phosphate synthase subunit HisF of Micrococcus luteus (strain ATCC 4698 / DSM 20030 / JCM 1464 / CCM 169 / CCUG 5858 / IAM 1056 / NBRC 3333 / NCIMB 9278 / NCTC 2665 / VKM Ac-2230) (Micrococcus lysodeikticus).